We begin with the raw amino-acid sequence, 119 residues long: Large ribosomal subunit protein uL22 (119 aa).

This sequence belongs to the universal ribosomal protein uL22 family. Part of the 50S ribosomal subunit.

Functionally, this protein binds specifically to 23S rRNA; its binding is stimulated by other ribosomal proteins, e.g. L4, L17, and L20. It is important during the early stages of 50S assembly. It makes multiple contacts with different domains of the 23S rRNA in the assembled 50S subunit and ribosome. In terms of biological role, the globular domain of the protein is located near the polypeptide exit tunnel on the outside of the subunit, while an extended beta-hairpin is found that lines the wall of the exit tunnel in the center of the 70S ribosome. The polypeptide is Large ribosomal subunit protein uL22 (Rickettsia bellii (strain OSU 85-389)).